Consider the following 297-residue polypeptide: N-acetylneuraminate lyase (297 aa).

Residues S47 and T48 each contribute to the aceneuramate site. Y137 (proton donor) is an active-site residue. K165 serves as the catalytic Schiff-base intermediate with substrate. Residues T167, G189, D191, E192, and S208 each contribute to the aceneuramate site.

This sequence belongs to the DapA family. NanA subfamily. As to quaternary structure, homotetramer.

The protein resides in the cytoplasm. The enzyme catalyses aceneuramate = aldehydo-N-acetyl-D-mannosamine + pyruvate. Its pathway is amino-sugar metabolism; N-acetylneuraminate degradation; D-fructose 6-phosphate from N-acetylneuraminate: step 1/5. Catalyzes the reversible aldol cleavage of N-acetylneuraminic acid (sialic acid; Neu5Ac) to form pyruvate and N-acetylmannosamine (ManNAc) via a Schiff base intermediate. This Salmonella typhimurium (strain LT2 / SGSC1412 / ATCC 700720) protein is N-acetylneuraminate lyase.